The following is a 411-amino-acid chain: Dual-specificity RNA methyltransferase RlmN (411 aa).

Catalysis depends on glutamate 125, which acts as the Proton acceptor. A Radical SAM core domain is found at 131 to 380 (EEGRGTLCIS…IRTPRGRDIL (250 aa)). A disulfide bridge connects residues cysteine 138 and cysteine 383. [4Fe-4S] cluster is bound by residues cysteine 145, cysteine 149, and cysteine 152. Residues 209–210 (GE), serine 241, 263–265 (SLH), and asparagine 340 contribute to the S-adenosyl-L-methionine site. The active-site S-methylcysteine intermediate is the cysteine 383.

The protein belongs to the radical SAM superfamily. RlmN family. Requires [4Fe-4S] cluster as cofactor.

The protein localises to the cytoplasm. It carries out the reaction adenosine(2503) in 23S rRNA + 2 reduced [2Fe-2S]-[ferredoxin] + 2 S-adenosyl-L-methionine = 2-methyladenosine(2503) in 23S rRNA + 5'-deoxyadenosine + L-methionine + 2 oxidized [2Fe-2S]-[ferredoxin] + S-adenosyl-L-homocysteine. The enzyme catalyses adenosine(37) in tRNA + 2 reduced [2Fe-2S]-[ferredoxin] + 2 S-adenosyl-L-methionine = 2-methyladenosine(37) in tRNA + 5'-deoxyadenosine + L-methionine + 2 oxidized [2Fe-2S]-[ferredoxin] + S-adenosyl-L-homocysteine. Specifically methylates position 2 of adenine 2503 in 23S rRNA and position 2 of adenine 37 in tRNAs. m2A2503 modification seems to play a crucial role in the proofreading step occurring at the peptidyl transferase center and thus would serve to optimize ribosomal fidelity. The protein is Dual-specificity RNA methyltransferase RlmN of Brucella melitensis biotype 2 (strain ATCC 23457).